The primary structure comprises 252 residues: Proteasome subunit alpha 1 (252 aa).

Methionine 1 carries the N-acetylmethionine; alternate modification.

Belongs to the peptidase T1A family. In terms of assembly, the 20S proteasome core is composed of 14 alpha and 14 beta subunits that assemble into four stacked heptameric rings, resulting in a barrel-shaped structure. The two inner rings, each composed of seven catalytic beta subunits, are sandwiched by two outer rings, each composed of seven alpha subunits. H.volcanii produces at least 2 types of 20S proteasomes: an alpha1-beta proteasome and a proteasome containing all three subunits (alpha1, alpha2, and beta) that appears to be asymmetrical with homo-oligomeric alpha1 and alpha2 rings positioned on separate ends. The catalytic chamber with the active sites is on the inside of the barrel. Has probably a gated structure, the ends of the cylinder being occluded by the N-termini of the alpha-subunits. Is likely capped at one or both ends by the proteasome regulatory ATPase, PAN. In terms of processing, acetylated. The acetylated form at Met-1 was shown to be in 100-fold excess of the unacetylated form with the initiator methionine removed in whole cells and purified 20S proteasomes.

The protein resides in the cytoplasm. The formation of the proteasomal ATPase PAN-20S proteasome complex, via the docking of the C-termini of PAN into the intersubunit pockets in the alpha-rings, triggers opening of the gate for substrate entry. Interconversion between the open-gate and close-gate conformations leads to a dynamic regulation of the 20S proteasome proteolysis activity. In vitro, the chymotrypsin-like activity of the alpha1-beta proteasome is potently inhibited by carbobenzoxyl-leucinyl-leucinyl-leucinal-H (MG132) and significantly by N-acetyl-leucinyl-leucinyl-norleucinal-H (calpain inhibitor I). In terms of biological role, component of the proteasome core, a large protease complex with broad specificity involved in protein degradation. The H.volcanii alpha1-beta proteasome is able to cleave oligopeptides after Phe, Tyr and Trp, poorly after Glu but not after Arg. Thus, displays chymotrypsin-like activity, low caspase-like activity but no trypsin-like activity. This Haloferax volcanii (strain ATCC 29605 / DSM 3757 / JCM 8879 / NBRC 14742 / NCIMB 2012 / VKM B-1768 / DS2) (Halobacterium volcanii) protein is Proteasome subunit alpha 1.